The following is a 541-amino-acid chain: Carboxypeptidase Y homolog A (541 aa).

The signal sequence occupies residues 1 to 17; sequence MKVATSALLIGAAAAQQ. The propeptide occupies 18–125; sequence QQILKFPDSF…KLEQYSLRAK (108 aa). Cystine bridges form between C179/C418, C313/C327, C337/C360, C344/C353, and C382/C388. A glycan (N-linked (GlcNAc...) asparagine) is linked at N210. S266 is an active-site residue. D457 is an active-site residue. The N-linked (GlcNAc...) asparagine glycan is linked to N505. H516 is an active-site residue.

It belongs to the peptidase S10 family.

It localises to the vacuole. The enzyme catalyses Release of a C-terminal amino acid with broad specificity.. In terms of biological role, vacuolar carboxypeptidase involved in degradation of small peptides. Digests preferentially peptides containing an aliphatic or hydrophobic residue in P1' position, as well as methionine, leucine or phenylalanine in P1 position of ester substrate. This Pyrenophora tritici-repentis (strain Pt-1C-BFP) (Wheat tan spot fungus) protein is Carboxypeptidase Y homolog A (cpyA).